Here is a 61-residue protein sequence, read N- to C-terminus: Large ribosomal subunit protein uL29 (61 aa).

It belongs to the universal ribosomal protein uL29 family.

The sequence is that of Large ribosomal subunit protein uL29 from Stenotrophomonas maltophilia (strain R551-3).